Reading from the N-terminus, the 351-residue chain is Phosphoribosylformylglycinamidine cyclo-ligase (351 aa).

This sequence belongs to the AIR synthase family.

The protein localises to the cytoplasm. It carries out the reaction 2-formamido-N(1)-(5-O-phospho-beta-D-ribosyl)acetamidine + ATP = 5-amino-1-(5-phospho-beta-D-ribosyl)imidazole + ADP + phosphate + H(+). The protein operates within purine metabolism; IMP biosynthesis via de novo pathway; 5-amino-1-(5-phospho-D-ribosyl)imidazole from N(2)-formyl-N(1)-(5-phospho-D-ribosyl)glycinamide: step 2/2. This chain is Phosphoribosylformylglycinamidine cyclo-ligase, found in Burkholderia ambifaria (strain MC40-6).